A 385-amino-acid polypeptide reads, in one-letter code: MSRVLLVTNDFPPRRGGIQSYLGEFVGRLVGSRAHAMTVYAPQWKGADAFDDAARAAGYRVVRHPSTVMLPGPTVDVRMRRLIAEHDIETVWFGAAAPLALLAPRARLAGASRVLASTHGHEVGWSMLPVARSVLRRIGDGTDVVTFVSSYTRSRFASAFGPAASLEYLPPGVDTDRFRPDPAARAELRKRYRLGERPTVVCLSRLVPRKGQDTLVTALPSIRRRVDGAALVIVGGGPYLETLRKLAHDCGVADHVTFTGGVATDELPAHHALADVFAMPCRTRGAGMDVEGLGIVFLEASAAGVPVIAGNSGGAPETVQHNKTGLVVDGRSVDRVADAVAELLIDRDRAVAMGAAGREWVTAQWRWDTLAAKLADFLRGDDAAR.

GDP-alpha-D-mannose contacts are provided by Arg-205, Lys-210, Val-262, and Glu-299.

It belongs to the glycosyltransferase group 1 family. Glycosyltransferase 4 subfamily.

It carries out the reaction a 1,2-diacyl-sn-glycero-3-phospho-[alpha-D-mannopyranosyl-(1&lt;-&gt;6)-D-myo-inositol] + GDP-alpha-D-mannose = a 2,6-O-bis(alpha-D-mannopyranosyl)-1-phosphatidyl-1D-myo-inositol + GDP + H(+). The catalysed reaction is a 1,2-diacyl-sn-glycero-3-phospho-[alpha-D-6-acyl-mannopyranosyl-(1&lt;-&gt;6)-D-myo-inositol] + GDP-alpha-D-mannose = a 2-O-(alpha-D-mannosyl)-6-O-(6-O-acyl-alpha-D-mannosyl)-1-phosphatidyl-1D-myo-inositol + GDP + H(+). The protein operates within phospholipid metabolism; phosphatidylinositol metabolism. In terms of biological role, involved in the biosynthesis of phosphatidyl-myo-inositol mannosides (PIM) which are early precursors in the biosynthesis of lipomannans (LM) and lipoarabinomannans (LAM). Catalyzes the addition of a mannosyl residue from GDP-D-mannose (GDP-Man) to the position 6 of a phosphatidyl-myo-inositol bearing an alpha-1,2-linked mannose residue (PIM1) to generate phosphatidyl-myo-inositol bearing alpha-1,2- and alpha-1,6-linked mannose residues (Ac1PIM2). PimB also catalyzes the addition of a mannosyl residue from GDP-Man to the position 6 of phosphatidyl-myo-inositol bearing an acylated alpha-1,2-linked mannose residue (Ac1PIM1) to generate monoacylated phosphatidyl-myo-inositol bearing alpha-1,2- and alpha-1,6-linked mannose residues (Ac1PIM2). The addition of the second mannosyl residue by PimB preferentially occurs before the acylation of the mannosyl residue transferred by PimA. Also able to transfer a mannosyl residue from GDP-Man to the position 6 of a phosphatidyl-myo-inositol (PI), but this reaction is very slow. This chain is GDP-mannose-dependent alpha-(1-6)-phosphatidylinositol monomannoside mannosyltransferase, found in Mycobacterium tuberculosis (strain CDC 1551 / Oshkosh).